The sequence spans 471 residues: Glutamate--tRNA ligase (471 aa).

Positions 9–19 (PSPTGYLHVGG) match the 'HIGH' region motif. C98, C100, C125, and D127 together coordinate Zn(2+). The 'KMSKS' region signature appears at 237–241 (KLSKR). K240 contacts ATP.

The protein belongs to the class-I aminoacyl-tRNA synthetase family. Glutamate--tRNA ligase type 1 subfamily. Monomer. Zn(2+) is required as a cofactor.

The protein localises to the cytoplasm. It catalyses the reaction tRNA(Glu) + L-glutamate + ATP = L-glutamyl-tRNA(Glu) + AMP + diphosphate. In terms of biological role, catalyzes the attachment of glutamate to tRNA(Glu) in a two-step reaction: glutamate is first activated by ATP to form Glu-AMP and then transferred to the acceptor end of tRNA(Glu). This Yersinia pseudotuberculosis serotype IB (strain PB1/+) protein is Glutamate--tRNA ligase.